The primary structure comprises 1391 residues: DNA-directed RNA polymerase subunit beta' (1391 aa).

Zn(2+) contacts are provided by Cys72, Cys74, Cys87, and Cys90. 3 residues coordinate Mg(2+): Asp462, Asp464, and Asp466. Zn(2+) contacts are provided by Cys816, Cys890, Cys897, and Cys900.

The protein belongs to the RNA polymerase beta' chain family. The RNAP catalytic core consists of 2 alpha, 1 beta, 1 beta' and 1 omega subunit. When a sigma factor is associated with the core the holoenzyme is formed, which can initiate transcription. Requires Mg(2+) as cofactor. It depends on Zn(2+) as a cofactor.

It catalyses the reaction RNA(n) + a ribonucleoside 5'-triphosphate = RNA(n+1) + diphosphate. In terms of biological role, DNA-dependent RNA polymerase catalyzes the transcription of DNA into RNA using the four ribonucleoside triphosphates as substrates. The protein is DNA-directed RNA polymerase subunit beta' of Neisseria gonorrhoeae (strain ATCC 700825 / FA 1090).